Reading from the N-terminus, the 109-residue chain is Nucleoid-associated protein Cvib_1034 (109 aa).

This sequence belongs to the YbaB/EbfC family. Homodimer.

Its subcellular location is the cytoplasm. It is found in the nucleoid. Its function is as follows. Binds to DNA and alters its conformation. May be involved in regulation of gene expression, nucleoid organization and DNA protection. In Chlorobium phaeovibrioides (strain DSM 265 / 1930) (Prosthecochloris vibrioformis (strain DSM 265)), this protein is Nucleoid-associated protein Cvib_1034.